Consider the following 122-residue polypeptide: Small ribosomal subunit protein uS13 (122 aa).

The span at 95–116 shows a compositional bias: basic residues; that stretch reads GLPCRGQKTKTNARTRKGKKKT. Residues 95 to 122 are disordered; that stretch reads GLPCRGQKTKTNARTRKGKKKTVGAATK.

Belongs to the universal ribosomal protein uS13 family. Part of the 30S ribosomal subunit. Forms a loose heterodimer with protein S19. Forms two bridges to the 50S subunit in the 70S ribosome.

Its function is as follows. Located at the top of the head of the 30S subunit, it contacts several helices of the 16S rRNA. In the 70S ribosome it contacts the 23S rRNA (bridge B1a) and protein L5 of the 50S subunit (bridge B1b), connecting the 2 subunits; these bridges are implicated in subunit movement. Contacts the tRNAs in the A and P-sites. This Aliarcobacter butzleri (strain RM4018) (Arcobacter butzleri) protein is Small ribosomal subunit protein uS13.